Here is a 360-residue protein sequence, read N- to C-terminus: Nicotinate-nucleotide--dimethylbenzimidazole phosphoribosyltransferase (360 aa).

The active-site Proton acceptor is E327.

This sequence belongs to the CobT family.

It catalyses the reaction 5,6-dimethylbenzimidazole + nicotinate beta-D-ribonucleotide = alpha-ribazole 5'-phosphate + nicotinate + H(+). Its pathway is nucleoside biosynthesis; alpha-ribazole biosynthesis; alpha-ribazole from 5,6-dimethylbenzimidazole: step 1/2. In terms of biological role, catalyzes the synthesis of alpha-ribazole-5'-phosphate from nicotinate mononucleotide (NAMN) and 5,6-dimethylbenzimidazole (DMB). This chain is Nicotinate-nucleotide--dimethylbenzimidazole phosphoribosyltransferase, found in Shewanella baltica (strain OS223).